The following is a 612-amino-acid chain: Methionine--tRNA ligase (612 aa).

The 'HIGH' region motif lies at 12-22; that stretch reads PYANGPRHIGH. Residues Cys-144, Cys-147, Cys-157, and Cys-160 each coordinate Zn(2+). Residues 350–354 carry the 'KMSKS' region motif; the sequence is KFSSS. Residue Ser-353 coordinates ATP. A disordered region spans residues 580–612; it reads IQPGTQLSKPKPLFPKLDPELAETGPEWAPVQK.

Belongs to the class-I aminoacyl-tRNA synthetase family. MetG type 1 subfamily. In terms of assembly, monomer. Zn(2+) serves as cofactor.

It localises to the cytoplasm. The catalysed reaction is tRNA(Met) + L-methionine + ATP = L-methionyl-tRNA(Met) + AMP + diphosphate. In terms of biological role, is required not only for elongation of protein synthesis but also for the initiation of all mRNA translation through initiator tRNA(fMet) aminoacylation. The polypeptide is Methionine--tRNA ligase (Corynebacterium jeikeium (strain K411)).